The primary structure comprises 169 residues: ATP synthase subunit b (169 aa).

A helical membrane pass occupies residues 3–23 (IKILLLVLPFFAFASEHGGVN).

This sequence belongs to the ATPase B chain family. As to quaternary structure, F-type ATPases have 2 components, F(1) - the catalytic core - and F(0) - the membrane proton channel. F(1) has five subunits: alpha(3), beta(3), gamma(1), delta(1), epsilon(1). F(0) has three main subunits: a(1), b(2) and c(10-14). The alpha and beta chains form an alternating ring which encloses part of the gamma chain. F(1) is attached to F(0) by a central stalk formed by the gamma and epsilon chains, while a peripheral stalk is formed by the delta and b chains.

It is found in the cell inner membrane. F(1)F(0) ATP synthase produces ATP from ADP in the presence of a proton or sodium gradient. F-type ATPases consist of two structural domains, F(1) containing the extramembraneous catalytic core and F(0) containing the membrane proton channel, linked together by a central stalk and a peripheral stalk. During catalysis, ATP synthesis in the catalytic domain of F(1) is coupled via a rotary mechanism of the central stalk subunits to proton translocation. Functionally, component of the F(0) channel, it forms part of the peripheral stalk, linking F(1) to F(0). This Campylobacter curvus (strain 525.92) protein is ATP synthase subunit b.